We begin with the raw amino-acid sequence, 1016 residues long: Formate dehydrogenase-O major subunit (1016 aa).

Residues 1-33 constitute a signal peptide (tat-type signal); sequence MQVSRRQFFKICAGGMAGTTAAALGFAPSVALA. The region spanning 43–106 is the 4Fe-4S Mo/W bis-MGD-type domain; sequence TRETRNTCTY…GLVDFIHSES (64 aa). [4Fe-4S] cluster contacts are provided by Cys-50, Cys-53, Cys-57, and Cys-92. Sec-196 is a non-standard amino acid (selenocysteine).

It belongs to the prokaryotic molybdopterin-containing oxidoreductase family. As to quaternary structure, formate dehydrogenase is a membrane-bound complex, formed by subunits alpha, beta and gamma. The cofactor is Mo-bis(molybdopterin guanine dinucleotide). Requires [4Fe-4S] cluster as cofactor. Post-translationally, exported by the Tat system. The position of the signal peptide cleavage has not been experimentally proven.

Its subcellular location is the periplasm. The enzyme catalyses formate + NAD(+) = CO2 + NADH. Functionally, allows to use formate as major electron donor during aerobic respiration. Subunit alpha possibly forms the active site. This chain is Formate dehydrogenase-O major subunit (fdoG), found in Escherichia coli (strain K12).